Here is a 397-residue protein sequence, read N- to C-terminus: 2-isopropylmalate synthase 1 (397 aa).

The Pyruvate carboxyltransferase domain maps to 6–268; it reads VIVFDTTLRD…VHGINTKEIY (263 aa). 4 residues coordinate Mn(2+): aspartate 15, histidine 203, histidine 205, and asparagine 239.

It belongs to the alpha-IPM synthase/homocitrate synthase family. LeuA type 1 subfamily. As to quaternary structure, homodimer. Mn(2+) is required as a cofactor.

Its subcellular location is the cytoplasm. It carries out the reaction 3-methyl-2-oxobutanoate + acetyl-CoA + H2O = (2S)-2-isopropylmalate + CoA + H(+). Its pathway is amino-acid biosynthesis; L-leucine biosynthesis; L-leucine from 3-methyl-2-oxobutanoate: step 1/4. Catalyzes the condensation of the acetyl group of acetyl-CoA with 3-methyl-2-oxobutanoate (2-ketoisovalerate) to form 3-carboxy-3-hydroxy-4-methylpentanoate (2-isopropylmalate). This chain is 2-isopropylmalate synthase 1, found in Caldanaerobacter subterraneus subsp. tengcongensis (strain DSM 15242 / JCM 11007 / NBRC 100824 / MB4) (Thermoanaerobacter tengcongensis).